A 443-amino-acid polypeptide reads, in one-letter code: Thymidine phosphorylase (443 aa).

This sequence belongs to the thymidine/pyrimidine-nucleoside phosphorylase family. In terms of assembly, homodimer.

The enzyme catalyses thymidine + phosphate = 2-deoxy-alpha-D-ribose 1-phosphate + thymine. It participates in pyrimidine metabolism; dTMP biosynthesis via salvage pathway; dTMP from thymine: step 1/2. Its function is as follows. The enzymes which catalyze the reversible phosphorolysis of pyrimidine nucleosides are involved in the degradation of these compounds and in their utilization as carbon and energy sources, or in the rescue of pyrimidine bases for nucleotide synthesis. The polypeptide is Thymidine phosphorylase (Shewanella baltica (strain OS185)).